Reading from the N-terminus, the 394-residue chain is Elongation factor Tu (394 aa).

The 195-residue stretch at 10-204 (KPHVNVGTIG…HLDSYIPEPE (195 aa)) folds into the tr-type G domain. The tract at residues 19–26 (GHVDHGKT) is G1. 19–26 (GHVDHGKT) contacts GTP. Threonine 26 is a Mg(2+) binding site. A G2 region spans residues 60–64 (GITIN). The segment at 81–84 (DCPG) is G3. GTP contacts are provided by residues 81 to 85 (DCPGH) and 136 to 139 (NKCD). The segment at 136–139 (NKCD) is G4. The interval 174–176 (SAL) is G5.

Belongs to the TRAFAC class translation factor GTPase superfamily. Classic translation factor GTPase family. EF-Tu/EF-1A subfamily. As to quaternary structure, monomer.

The protein localises to the cytoplasm. The catalysed reaction is GTP + H2O = GDP + phosphate + H(+). In terms of biological role, GTP hydrolase that promotes the GTP-dependent binding of aminoacyl-tRNA to the A-site of ribosomes during protein biosynthesis. This Cronobacter sakazakii (strain ATCC BAA-894) (Enterobacter sakazakii) protein is Elongation factor Tu.